Consider the following 298-residue polypeptide: Transcription factor BOA (298 aa).

Disordered regions lie at residues 1 to 26, 79 to 143, and 206 to 232; these read MGKE…EYRI, LRSS…KRPR, and EDPY…GGGS. Acidic residues predominate over residues 10-20; it reads YGDDDGEDAGG. Residues 104–113 show a composition bias toward basic and acidic residues; that stretch reads DPKKQKKSDG. Acidic residues predominate over residues 122-131; the sequence is STAEEGDSGP. Positions 138 to 197 form a DNA-binding region, myb-like GARP; sequence TSKRPRLVWTPQLHKRFVDVVAHLGIKNAVPKTIMQLMNVEGLTRENVASHLQKYRLYLK. Residues 209 to 227 are compositionally biased toward polar residues; it reads YSSSDQLFSSTPVPPQSFQ.

It localises to the nucleus. Its function is as follows. Transcription factor that is a critical component of the regulatory circuit of the circadian clock. Binds to specific sites on CCA1 promoter leading to CCA1 activation. Is required for the rhythmic expression of other clock genes such as LHY, GI and APRR1/TOC1. In Arabidopsis thaliana (Mouse-ear cress), this protein is Transcription factor BOA (BOA).